The sequence spans 117 residues: Large ribosomal subunit protein bL19 (117 aa).

It belongs to the bacterial ribosomal protein bL19 family.

In terms of biological role, this protein is located at the 30S-50S ribosomal subunit interface and may play a role in the structure and function of the aminoacyl-tRNA binding site. The sequence is that of Large ribosomal subunit protein bL19 from Phocaeicola vulgatus (strain ATCC 8482 / DSM 1447 / JCM 5826 / CCUG 4940 / NBRC 14291 / NCTC 11154) (Bacteroides vulgatus).